The primary structure comprises 184 residues: NADH-quinone oxidoreductase subunit B (184 aa).

[4Fe-4S] cluster-binding residues include Cys-37, Cys-38, Cys-103, and Cys-132.

This sequence belongs to the complex I 20 kDa subunit family. NDH-1 is composed of 14 different subunits. Subunits NuoB, C, D, E, F, and G constitute the peripheral sector of the complex. [4Fe-4S] cluster is required as a cofactor.

It localises to the cell membrane. It catalyses the reaction a quinone + NADH + 5 H(+)(in) = a quinol + NAD(+) + 4 H(+)(out). Functionally, NDH-1 shuttles electrons from NADH, via FMN and iron-sulfur (Fe-S) centers, to quinones in the respiratory chain. The immediate electron acceptor for the enzyme in this species is believed to be a menaquinone. Couples the redox reaction to proton translocation (for every two electrons transferred, four hydrogen ions are translocated across the cytoplasmic membrane), and thus conserves the redox energy in a proton gradient. The polypeptide is NADH-quinone oxidoreductase subunit B (Mycolicibacterium paratuberculosis (strain ATCC BAA-968 / K-10) (Mycobacterium paratuberculosis)).